A 276-amino-acid chain; its full sequence is UPF0761 membrane protein APL_1950 (276 aa).

7 helical membrane passes run 33–53 (TLAI…FPIF), 90–110 (MGIV…QSID), 125–145 (IFIS…LAGG), 147–167 (IAIS…LLSF), 171–191 (LLQY…YWLV), 203–223 (LGAI…VWYI), and 239–259 (LPIM…GGLI).

The protein belongs to the UPF0761 family.

The protein resides in the cell inner membrane. The polypeptide is UPF0761 membrane protein APL_1950 (Actinobacillus pleuropneumoniae serotype 5b (strain L20)).